Consider the following 78-residue polypeptide: Large ribosomal subunit protein bL28 (78 aa).

The segment at 1 to 21 is disordered; sequence MSRVCQVTGKRPVSGNNRSHA.

This sequence belongs to the bacterial ribosomal protein bL28 family.

In Yersinia enterocolitica serotype O:8 / biotype 1B (strain NCTC 13174 / 8081), this protein is Large ribosomal subunit protein bL28.